Consider the following 271-residue polypeptide: Purine nucleoside phosphorylase 1 (271 aa).

Phosphate contacts are provided by residues Ser28, His59, Arg79–His81, and Ala111. Ser28 bears the Phosphoserine mark. Glu191 provides a ligand contact to a purine D-ribonucleoside. Ser210 contributes to the phosphate binding site. Asn233 lines the a purine D-ribonucleoside pocket.

It belongs to the PNP/MTAP phosphorylase family. As to quaternary structure, homotrimer.

The enzyme catalyses a purine 2'-deoxy-D-ribonucleoside + phosphate = a purine nucleobase + 2-deoxy-alpha-D-ribose 1-phosphate. It participates in purine metabolism; purine nucleoside salvage. The purine nucleoside phosphorylases catalyze the phosphorolytic breakdown of the N-glycosidic bond in the beta-(deoxy)ribonucleoside molecules, with the formation of the corresponding free purine bases and pentose-1-phosphate. Cleaves guanosine, inosine, 2'-deoxyguanosine and 2'-deoxyinosine. This Bacillus subtilis (strain 168) protein is Purine nucleoside phosphorylase 1 (punA).